Consider the following 2313-residue polypeptide: Cell surface glycoprotein 1 (2313 aa).

A signal peptide spans 1 to 28 (MKRKNKVLSILLTLLLIISTTSVNMSFA). 2 consecutive Cohesin domains span residues 34-197 (IEMV…VVEA) and 205-367 (VALE…EIVV). A compositionally biased stretch (acidic residues) spans 369-378 (GEEPGEEPTE). The segment at 369-400 (GEEPGEEPTEEPVPTETSVDPTPTVTEEPVPS) is disordered. The span at 380–400 (PVPTETSVDPTPTVTEEPVPS) shows a compositional bias: low complexity. A Cohesin 3 domain is found at 407–569 (VIMELDKTKV…SVVQPGEIVV (163 aa)). Over residues 571-580 (GEEPGEEPTE) the composition is skewed to acidic residues. Residues 571 to 602 (GEEPGEEPTEEPVPTETSVDPTPTVTEEPVPS) form a disordered region. Residues 582–602 (PVPTETSVDPTPTVTEEPVPS) show a composition bias toward low complexity. Positions 609–771 (VIMELDKTKV…SVVQPGEIVA (163 aa)) constitute a Cohesin 4 domain. Positions 772-782 (EGEEPGEEPTE) are enriched in acidic residues. Residues 772-805 (EGEEPGEEPTEEPVPTETSADPTPTVTEEPVPSE) form a disordered region. Low complexity predominate over residues 784–803 (PVPTETSADPTPTVTEEPVP). In terms of domain architecture, Cohesin 5 spans 811-973 (VIMELDKTKV…SVVQPGEIVA (163 aa)). The span at 974 to 984 (EGEEPGEEPTE) shows a compositional bias: acidic residues. The disordered stretch occupies residues 974–1007 (EGEEPGEEPTEEPVPTETPVDPTPTVTEEPVPSE). Low complexity predominate over residues 986–1007 (PVPTETPVDPTPTVTEEPVPSE). Residues 1013–1175 (VIMELDKTKV…SVVQPGEIVA (163 aa)) form the Cohesin 6 domain. Disordered regions lie at residues 1177–1203 (GEEP…EPVP) and 1374–2111 (ASDE…PDGS). Low complexity predominate over residues 1184–1203 (PVPTETPVDPTPTVTEEPVP). Positions 1211 to 1375 (VIMELDKTKV…IQPAPIKAAS (165 aa)) constitute a Cohesin 7 domain. Residues 1376–1390 (DEPIPTDTPSDEPTP) show a composition bias toward low complexity. The approximate tandem repeats of T-P-S-D-E-P stretch occupies residues 1383–2025 (TPSDEPTPSD…SDEPTPSETP (643 aa)). Residues 1391 to 1411 (SDEPTPSDEPTPSDEPTPSDE) are compositionally biased toward pro residues. Residues 1423–1433 (PTDTPSDEPTP) show a composition bias toward low complexity. Residues 1434–1454 (SDEPTPSDEPTPSDEPTPSDE) are compositionally biased toward pro residues. Low complexity predominate over residues 1466–1476 (PTDTPSDEPTP). Positions 1477 to 1497 (SDEPTPSDEPTPSDEPTPSDE) are enriched in pro residues. The segment covering 1509 to 1519 (PTDTPSDEPTP) has biased composition (low complexity). Positions 1520–1540 (SDEPTPSDEPTPSDEPTPSDE) are enriched in pro residues. Residues 1552 to 1562 (PTDTPSDEPTP) show a composition bias toward low complexity. Residues 1563–1595 (SDEPTPSDEPTPSDEPTPSDEPTPSDEPTPSDE) show a composition bias toward pro residues. The span at 1607–1617 (PTDTPSDEPTP) shows a compositional bias: low complexity. The span at 1618–1650 (SDEPTPSDEPTPSDEPTPSDEPTPSDEPTPSDE) shows a compositional bias: pro residues. Residues 1662-1672 (PTDTPSDEPTP) show a composition bias toward low complexity. Residues 1673-1693 (SDEPTPSDEPTPSDEPTPSDE) are compositionally biased toward pro residues. Over residues 1705–1715 (PTDTPSDEPTP) the composition is skewed to low complexity. The span at 1716–1736 (SDEPTPSDEPTPSDEPTPSDE) shows a compositional bias: pro residues. Positions 1748 to 1758 (PTDTPSDEPTP) are enriched in low complexity. Over residues 1759–1779 (SDEPTPSDEPTPSDEPTPSDE) the composition is skewed to pro residues. Positions 1791–1801 (PTDTPSDEPTP) are enriched in low complexity. The span at 1802 to 1822 (SDEPTPSDEPTPSDEPTPSDE) shows a compositional bias: pro residues. A compositionally biased stretch (low complexity) spans 1834–1844 (PTDTPSDEPTP). Residues 1845–1865 (SDEPTPSDEPTPSDEPTPSDE) show a composition bias toward pro residues. A compositionally biased stretch (low complexity) spans 1877–1887 (PTDTPSDEPTP). A compositionally biased stretch (pro residues) spans 1888–1908 (SDEPTPSDEPTPSDEPTPSDE). Residues 1920-1930 (PTDTPSDEPTP) show a composition bias toward low complexity. Pro residues predominate over residues 1931-1963 (SDEPTPSDEPTPSDEPTPSDEPTPSDEPTPSDE). Over residues 1975-1985 (PTDTPSDEPTP) the composition is skewed to low complexity. Pro residues-rich tracts occupy residues 1986–2018 (SDEP…PSDE) and 2027–2039 (EPTP…PTPS). Residues 2045–2062 (GSGGSGGSGGGGGGGGGT) are compositionally biased toward gly residues. 3 consecutive SLH domains span residues 2067-2140 (PTPT…YGAQ), 2141-2204 (SASP…EIMS), and 2211-2274 (ISNP…GAPK). Low complexity predominate over residues 2073-2082 (SKPTSTPAPT).

As to quaternary structure, assembled into mono-layered crystalline arrays.

Its subcellular location is the secreted. The protein resides in the cell wall. The protein localises to the S-layer. This chain is Cell surface glycoprotein 1 (olpB), found in Acetivibrio thermocellus (strain ATCC 27405 / DSM 1237 / JCM 9322 / NBRC 103400 / NCIMB 10682 / NRRL B-4536 / VPI 7372) (Clostridium thermocellum).